Here is a 188-residue protein sequence, read N- to C-terminus: Pyridoxal 5'-phosphate synthase subunit PdxT (188 aa).

An L-glutamine-binding site is contributed by 47 to 49 (GES). Cys79 acts as the Nucleophile in catalysis. L-glutamine contacts are provided by residues Arg105 and 134–135 (IR). Active-site charge relay system residues include His170 and Glu172.

The protein belongs to the glutaminase PdxT/SNO family. As to quaternary structure, in the presence of PdxS, forms a dodecamer of heterodimers. Only shows activity in the heterodimer.

It carries out the reaction aldehydo-D-ribose 5-phosphate + D-glyceraldehyde 3-phosphate + L-glutamine = pyridoxal 5'-phosphate + L-glutamate + phosphate + 3 H2O + H(+). The enzyme catalyses L-glutamine + H2O = L-glutamate + NH4(+). The protein operates within cofactor biosynthesis; pyridoxal 5'-phosphate biosynthesis. Its function is as follows. Catalyzes the hydrolysis of glutamine to glutamate and ammonia as part of the biosynthesis of pyridoxal 5'-phosphate. The resulting ammonia molecule is channeled to the active site of PdxS. In Listeria innocua serovar 6a (strain ATCC BAA-680 / CLIP 11262), this protein is Pyridoxal 5'-phosphate synthase subunit PdxT.